A 593-amino-acid polypeptide reads, in one-letter code: MAEMGSKGVTAGKIASNVQKKLTRAQEKVLQKLGKADETKDEQFEQCVQNFNKQLTEGTRLQKDLRTYLASVKAMHEASKKLNECLQEVYEPDWPGRDEANKIAENNDLLWMDYHQKLVDQALLTMDTYLGQFPDIKSRIAKRGRKLVDYDSARHHYESLQTAKKKDEAKIAKPVSLLEKAAPQWCQGKLQAHLVAQTNLLRNQAEEELIKAQKVFEEMNVDLQEELPSLWNSRVGFYVNTFQSIAGLEENFHKEMSKLNQNLNDVLVGLEKQHGSNTFTVKAQPSDNAPAKGNKSPSPPDGSPAATPEIRVNHEPEPAGGATPGATLPKSPSQLRKGPPVPPPPKHTPSKEVKQEQILSLFEDTFVPEISVTTPSQFEAPGPFSEQASLLDLDFDPLPPVTSPVKAPTPSGQSIPWDLWEPTESPAGSLPSGEPSAAEGTFAVSWPSQTAEPGPAQPAEASEVAGGTQPAAGAQEPGETAASEAASSSLPAVVVETFPATVNGTVEGGSGAGRLDLPPGFMFKVQAQHDYTATDTDELQLKAGDVVLVIPFQNPEEQDEGWLMGVKESDWNQHKELEKCRGVFPENFTERVP.

Residue Ala-2 is modified to N-acetylalanine. Residues 2–122 form an interaction with BIN2 region; that stretch reads AEMGSKGVTA…DYHQKLVDQA (121 aa). Coiled coils occupy residues 15–42 and 193–267; these read ASNVQKKLTRAQEKVLQKLGKADETKDE and HLVA…NDVL. The 248-residue stretch at 29 to 276 folds into the BAR domain; sequence VLQKLGKADE…LVGLEKQHGS (248 aa). Disordered regions lie at residues 280-354 and 400-488; these read TVKA…KEVK and PVTS…AASS. Phosphoserine occurs at positions 296, 298, and 303. Phosphothreonine is present on residues Thr-307 and Thr-323. Ser-331 bears the Phosphoserine mark. The clathrin-binding stretch occupies residues 378 to 421; the sequence is FEAPGPFSEQASLLDLDFDPLPPVTSPVKAPTPSGQSIPWDLWE. Positions 520–593 constitute an SH3 domain; it reads GFMFKVQAQH…FPENFTERVP (74 aa).

Heterodimer with AMPH. Binds SH3GLB1. Interacts (via SH3 domain) with DNM1. Interacts with SYNJ1. Interacts (via SH3 domain) with DNM2. Isoform IIA interacts with CLTC. Isoform IIB does not interact with CLTC. Isoform IIC1 does not interact with CLTC. Isoform IIC2 does not interact with CLTC. Interacts with AP2A2. Interacts with AP2B1. Interacts with MYC (via N-terminal transactivation domain); the interaction requires the integrity of the conserved MYC box regions 1 and 2. Interacts with BIN2. Interacts with SNX4. Interacts (via BAR domain) with BACE1. Binds (via BAR domain) F-actin. As to quaternary structure, (Microbial infection) Interacts (SH3 domain) with HCV NS5A. Post-translationally, phosphorylated by protein kinase C. As to expression, ubiquitous. Highest expression in the brain and muscle. Expressed in oligodendrocytes. Isoform IIA is expressed only in the brain, where it is detected in the gray matter, but not in the white matter. Isoform BIN1 is widely expressed with highest expression in skeletal muscle.

It localises to the nucleus. The protein localises to the cytoplasm. Its subcellular location is the endosome. The protein resides in the cell membrane. It is found in the sarcolemma. It localises to the T-tubule. Functionally, is a key player in the control of plasma membrane curvature, membrane shaping and membrane remodeling. Required in muscle cells for the formation of T-tubules, tubular invaginations of the plasma membrane that function in depolarization-contraction coupling. Is a negative regulator of endocytosis. Is also involved in the regulation of intracellular vesicles sorting, modulation of BACE1 trafficking and the control of amyloid-beta production. In neuronal circuits, endocytosis regulation may influence the internalization of PHF-tau aggregates. May be involved in the regulation of MYC activity and the control cell proliferation. Has actin bundling activity and stabilizes actin filaments against depolymerization in vitro. The sequence is that of Myc box-dependent-interacting protein 1 (BIN1) from Homo sapiens (Human).